The sequence spans 355 residues: 3-isopropylmalate dehydrogenase (355 aa).

78 to 91 (GYKWDNLPRPERPE) provides a ligand contact to NAD(+). Substrate is bound by residues R98, R136, and D226. 3 residues coordinate Mg(2+): D226, D250, and D254. 284–296 (GSAPDIAGQDKAN) is a binding site for NAD(+).

This sequence belongs to the isocitrate and isopropylmalate dehydrogenases family. LeuB type 1 subfamily. As to quaternary structure, homodimer. Requires Mg(2+) as cofactor. Mn(2+) serves as cofactor.

Its subcellular location is the cytoplasm. The catalysed reaction is (2R,3S)-3-isopropylmalate + NAD(+) = 4-methyl-2-oxopentanoate + CO2 + NADH. It functions in the pathway amino-acid biosynthesis; L-leucine biosynthesis; L-leucine from 3-methyl-2-oxobutanoate: step 3/4. In terms of biological role, catalyzes the oxidation of 3-carboxy-2-hydroxy-4-methylpentanoate (3-isopropylmalate) to 3-carboxy-4-methyl-2-oxopentanoate. The product decarboxylates to 4-methyl-2 oxopentanoate. The chain is 3-isopropylmalate dehydrogenase (leuB) from Arthrospira platensis (Spirulina platensis).